The chain runs to 100 residues: UPF0213 protein CKO_04549 (100 aa).

The GIY-YIG domain occupies 2–77; sequence TPWYLYLIRT…KRLTKRQKER (76 aa).

This sequence belongs to the UPF0213 family.

This Citrobacter koseri (strain ATCC BAA-895 / CDC 4225-83 / SGSC4696) protein is UPF0213 protein CKO_04549.